The sequence spans 310 residues: UPF0324 membrane protein VP0936 (310 aa).

Transmembrane regions (helical) follow at residues 7–29, 44–63, 75–94, 104–126, 133–155, 165–187, 199–218, 228–250, 257–279, and 289–308; these read PFGL…LVIG, IASF…GFGI, GIGL…SLIA, AYLI…APAI, IGLA…PVIG, FGTW…SAYG, LARA…IFSR, LVIP…FPQL, IFTI…ISIS, and LLFG…SWLV.

This sequence belongs to the UPF0324 family.

The protein resides in the cell membrane. In Vibrio parahaemolyticus serotype O3:K6 (strain RIMD 2210633), this protein is UPF0324 membrane protein VP0936.